A 322-amino-acid chain; its full sequence is MDYLQAMRLREANRLMIAKFKKESPANDSPEQRLVRLTNENPQYNVDFLFHSYSKDWFVSDVGMKMSNVMIPNQMLALDCEMVLCEDGTEGVVRVGAVDRNLKVILDEFVKPHKPVVDYRTAITGVTAEDVQKATLSLVDIQEKLRPFLSAGAILIDHPIVIDTSLVFKYPNSRKLRRPSLNTLCMSVLGYEVQKAGVSHHCVHDAAAAMKLALAVIKKRVDTTITLTKEAEKSRLFLHRIPHHLSSEELKKDLALKFFPKNFTIDVKPAKTQGGYYCAVVIFGSSVEANQAFENVNGYKETDSSGLPQKLISCSISTFYVR.

The 139-residue stretch at 75–213 folds into the Exonuclease domain; that stretch reads MLALDCEMVL…HDAAAAMKLA (139 aa).

This sequence belongs to the REXO1/REXO3 family.

Its subcellular location is the nucleus. Functionally, putative 3'-5' exonuclease degrading single-stranded small RNAs. The chain is Putative small RNA degrading nuclease 4 (SDN4) from Arabidopsis thaliana (Mouse-ear cress).